We begin with the raw amino-acid sequence, 1480 residues long: MQRSPLEKASVVSKLFFSWTRPILRKGYRQRLELSDIYQIPSVDSADNLSEKLEREWDRELASKKNPKLINALRRCFFWRFMFYGIFLYLGEVTKAVQPLLLGRIIASYDPDNKEERSIAIYLGIGLCLLFIVRTLLLHPAIFGLHHIGMQMRIAMFSLIYKKTLKLSSRVLDKISIGQLVSLLSNNLNKFDEGLALAHFVWIAPLQVALLMGLIWELLQASAFCGLGFLIVLALFQAGLGRMMMKYRDQRAGKISERLVITSEMIENIQSVKAYCWEEAMEKMIENLRQTELKLTRKAAYVRYFNSSAFFFSGFFVVFLSVLPYALIKGIILRKIFTTISFCIVLRMAVTRQFPWAVQTWYDSLGAINKIQDFLQKQEYKTLEYNLTTTEVVMENVTAFWEEGFGELFEKAKQNNNNRKTSNGDDSLFFSNFSLLGTPVLKDINFKIERGQLLAVAGSTGAGKTSLLMMIMGELEPSEGKIKHSGRISFCSQFSWIMPGTIKENIIFGVSYDEYRYRSVIKACQLEEDISKFAEKDNIVLGEGGITLSGGQRARISLARAVYKDADLYLLDSPFGYLDVLTEKEIFESCVCKLMANKTRILVTSKMEHLKKADKILILHEGSSYFYGTFSELQNLRPDFSSKLMGCDSFDQFSAERRNSILTETLRRFSLEGDAPVSWTETKKQSFKQTGEFGEKRKNSILNPINSIRKFSIVQKTPLQMNGIEEDSDEPLERRLSLVPDSEQGEAILPRISVISTGPTLQARRRQSVLNLMTHSVNQGQNIHRKTTASTRKVSLAPQANLTELDIYSRRLSQETGLEISEEINEEDLKECFFDDMESIPAVTTWNTYLRYITVHKSLIFVLIWCLVIFLAEVAASLVVLWLLGNTPLQDKGNSTHSRNNSYAVIITSTSSYYVFYIYVGVADTLLAMGFFRGLPLVHTLITVSKILHHKMLHSVLQAPMSTLNTLKAGGILNRFSKDIAILDDLLPLTIFDFIQLLLIVIGAIAVVAVLQPYIFVATVPVIVAFIMLRAYFLQTSQQLKQLESEGRSPIFTHLVTSLKGLWTLRAFGRQPYFETLFHKALNLHTANWFLYLSTLRWFQMRIEMIFVIFFIAVTFISILTTGEGEGRVGIILTLAMNIMSTLQWAVNSSIDVDSLMRSVSRVFKFIDMPTEGKPTKSTKPYKNGQLSKVMIIENSHVKKDYIWPSGGQMTVKDLTAKYTEGGNAILENISFSISPGQRVGLLGRTGSGKSTLLSAFLRLLNTEGEIQIDGVSWDSITLQQWRKAFGVIPQKVFIFSGTFRKNLDPYEQWSDQEIWKVADEVGLRSVIEQFPGKLDFVLVDGGCVLSHGHKQLMCLARSVLSKAKILLLDEPSAHLDPVAYQIIRRTLKQAFADCTVILCEHRIEAMLECQQFLVIEENKVRQYDSIQKLLNERSLFRQAISPSDRVKLFPHRNSSKCKSKPQIAALKEETEEEVQDTRL.

Residues 1-77 are Cytoplasmic-facing; sequence MQRSPLEKAS…KLINALRRCF (77 aa). The helical transmembrane segment at 78–98 threads the bilayer; the sequence is FWRFMFYGIFLYLGEVTKAVQ. An ABC transmembrane type-1 1 domain is found at 81-365; it reads FMFYGIFLYL…WAVQTWYDSL (285 aa). The Extracellular portion of the chain corresponds to 99 to 122; it reads PLLLGRIIASYDPDNKEERSIAIY. Residues 123 to 146 traverse the membrane as a helical segment; it reads LGIGLCLLFIVRTLLLHPAIFGLH. The Cytoplasmic portion of the chain corresponds to 147 to 195; sequence HIGMQMRIAMFSLIYKKTLKLSSRVLDKISIGQLVSLLSNNLNKFDEGL. Residues 196-216 form a helical membrane-spanning segment; sequence ALAHFVWIAPLQVALLMGLIW. Over 217–222 the chain is Extracellular; it reads ELLQAS. The helical transmembrane segment at 223 to 243 threads the bilayer; sequence AFCGLGFLIVLALFQAGLGRM. Topologically, residues 244 to 298 are cytoplasmic; sequence MMKYRDQRAGKISERLVITSEMIENIQSVKAYCWEEAMEKMIENLRQTELKLTRK. Residues 299–319 traverse the membrane as a helical segment; sequence AAYVRYFNSSAFFFSGFFVVF. At 320–339 the chain is on the extracellular side; that stretch reads LSVLPYALIKGIILRKIFTT. The chain crosses the membrane as a helical span at residues 340–358; the sequence is ISFCIVLRMAVTRQFPWAV. Residues 359 to 858 lie on the Cytoplasmic side of the membrane; the sequence is QTWYDSLGAI…YLRYITVHKS (500 aa). Residues tryptophan 401, serine 434, 458–465, and glutamine 493 contribute to the ATP site; that span reads GSTGAGKT. An ABC transporter 1 domain is found at 423-646; that stretch reads NGDDSLFFSN…RPDFSSKLMG (224 aa). Cysteine 524 is lipidated: S-palmitoyl cysteine. Phosphoserine is present on residues serine 549 and serine 660. The segment at 654-831 is disordered R region; the sequence is SAERRNSILT…EEINEEDLKE (178 aa). Serine 670 is modified (phosphoserine; by PKA). Serine 686 is modified (phosphoserine). Residue lysine 688 forms a Glycyl lysine isopeptide (Lys-Gly) (interchain with G-Cter in ubiquitin) linkage. Phosphoserine occurs at positions 700 and 712. Threonine 717 bears the Phosphothreonine mark. Serine 737, serine 753, serine 768, serine 790, serine 795, and serine 813 each carry phosphoserine. Residues 859-879 form a helical membrane-spanning segment; that stretch reads LIFVLIWCLVIFLAEVAASLV. The 297-residue stretch at 859-1155 folds into the ABC transmembrane type-1 2 domain; the sequence is LIFVLIWCLV…AVNSSIDVDS (297 aa). At 880-918 the chain is on the extracellular side; sequence VLWLLGNTPLQDKGNSTHSRNNSYAVIITSTSSYYVFYI. 2 N-linked (GlcNAc...) asparagine glycosylation sites follow: asparagine 894 and asparagine 900. A discontinuously helical transmembrane segment spans residues 919–939; it reads YVGVADTLLAMGFFRGLPLVH. Residues 940–990 lie on the Cytoplasmic side of the membrane; the sequence is TLITVSKILHHKMLHSVLQAPMSTLNTLKAGGILNRFSKDIAILDDLLPLT. The chain crosses the membrane as a helical span at residues 991 to 1011; that stretch reads IFDFIQLLLIVIGAIAVVAVL. Residues 1012–1013 are Extracellular-facing; the sequence is QP. A helical membrane pass occupies residues 1014 to 1034; it reads YIFVATVPVIVAFIMLRAYFL. Residues 1035–1095 are Cytoplasmic-facing; that stretch reads QTSQQLKQLE…TANWFLYLST (61 aa). A helical transmembrane segment spans residues 1096-1116; sequence LRWFQMRIEMIFVIFFIAVTF. At 1117–1130 the chain is on the extracellular side; the sequence is ISILTTGEGEGRVG. The helical transmembrane segment at 1131-1151 threads the bilayer; sequence IILTLAMNIMSTLQWAVNSSI. Residues 1152–1480 are Cytoplasmic-facing; sequence DVDSLMRSVS…TEEEVQDTRL (329 aa). The ABC transporter 2 domain maps to 1210–1443; it reads MTVKDLTAKY…RSLFRQAISP (234 aa). Residues tyrosine 1219 and 1244 to 1251 contribute to the ATP site; that span reads GRTGSGKS. Residues 1386-1480 are interaction with GORASP2; it reads RTLKQAFADC…TEEEVQDTRL (95 aa). Cysteine 1395 carries the S-palmitoyl cysteine lipid modification. Phosphoserine is present on residues serine 1444 and serine 1456. Residues 1452–1480 form a disordered region; sequence HRNSSKCKSKPQIAALKEETEEEVQDTRL. Residues 1470 to 1480 show a composition bias toward acidic residues; that stretch reads ETEEEVQDTRL. Residues 1478–1480 carry the PDZ-binding motif; the sequence is TRL.

The protein belongs to the ABC transporter superfamily. ABCC family. CFTR transporter (TC 3.A.1.202) subfamily. As to quaternary structure, monomer; does not require oligomerization for channel activity. May form oligomers in the membrane. Interacts with SLC26A3, SLC26A6 and NHERF1. Interacts with SHANK2. Interacts with MYO6. Interacts (via C-terminus) with GOPC (via PDZ domain); this promotes CFTR internalization and thereby decreases channel activity. Interacts with SLC4A7 through NHERF1. Found in a complex with MYO5B and RAB11A. Interacts with ANO1. Interacts with SLC26A8. Interacts with AHCYL1; the interaction increases CFTR activity. Interacts with CSE1L. The core-glycosylated form interacts with GORASP2 (via PDZ GRASP-type 1 domain) in respone to ER stress. Interacts with MARCHF2; the interaction leads to CFTR ubiqtuitination and degradation. Interacts with ADGRG2. In terms of processing, N-glycosylated. Phosphorylated; cAMP treatment promotes phosphorylation and activates the channel. Dephosphorylation decreases the ATPase activity (in vitro). Phosphorylation at PKA sites activates the channel. Phosphorylation at PKC sites enhances the response to phosphorylation by PKA. Phosphorylated by AMPK; this inhibits channel activity. Post-translationally, ubiquitinated, leading to its degradation in the lysosome. Deubiquitination by USP10 in early endosomes enhances its endocytic recycling to the cell membrane. Ubiquitinated by RNF185 during ER stress. Ubiquitinated by MARCHF2.

It localises to the apical cell membrane. Its subcellular location is the early endosome membrane. It is found in the cell membrane. The protein resides in the recycling endosome membrane. The protein localises to the endoplasmic reticulum membrane. It localises to the nucleus. The enzyme catalyses ATP + H2O + closed Cl(-) channel = ADP + phosphate + open Cl(-) channel.. The catalysed reaction is chloride(in) = chloride(out). It catalyses the reaction hydrogencarbonate(in) = hydrogencarbonate(out). It carries out the reaction ATP + H2O = ADP + phosphate + H(+). In terms of biological role, epithelial ion channel that plays an important role in the regulation of epithelial ion and water transport and fluid homeostasis. Mediates the transport of chloride ions across the cell membrane. Possesses an intrinsic ATPase activity and utilizes ATP to gate its channel; the passive flow of anions through the channel is gated by cycles of ATP binding and hydrolysis by the ATP-binding domains. The ion channel is also permeable to HCO(3)(-); selectivity depends on the extracellular chloride concentration. Exerts its function also by modulating the activity of other ion channels and transporters. Contributes to the regulation of the pH and the ion content of the epithelial fluid layer. Modulates the activity of the epithelial sodium channel (ENaC) complex, in part by regulating the cell surface expression of the ENaC complex. May regulate bicarbonate secretion and salvage in epithelial cells by regulating the transporter SLC4A7. Can inhibit the chloride channel activity of ANO1. Plays a role in the chloride and bicarbonate homeostasis during sperm epididymal maturation and capacitation. This chain is Cystic fibrosis transmembrane conductance regulator, found in Pan troglodytes (Chimpanzee).